A 221-amino-acid polypeptide reads, in one-letter code: D-glycero-alpha-D-manno-heptose 1-phosphate guanylyltransferase (221 aa).

It belongs to the D-alpha-D-heptose-1-P guanylyltransferase family.

The enzyme catalyses D-glycero-alpha-D-manno-heptose 1-phosphate + GTP + H(+) = GDP-D-glycero-alpha-D-manno-heptose + diphosphate. The protein operates within nucleotide-sugar biosynthesis; GDP-D-glycero-alpha-D-manno-heptose biosynthesis; GDP-D-glycero-alpha-D-manno-heptose from D-glycero-alpha-D-manno-heptose 7-phosphate: step 3/3. Its pathway is capsule biogenesis; capsule polysaccharide biosynthesis. Catalyzes the GDP transfer from GTP to D-glycero-alpha-D-manno-heptose 1-phosphate, yielding GDP-D-alpha-D-heptose. Is able to use ATP, CTP or UTP as substrate in the presence of pyrophosphatase, but at a significantly slower rate. Can also form GDP-alpha-D-mannose from alpha-D-mannose 1-phosphate and GTP. In Campylobacter jejuni subsp. jejuni serotype O:2 (strain ATCC 700819 / NCTC 11168), this protein is D-glycero-alpha-D-manno-heptose 1-phosphate guanylyltransferase.